We begin with the raw amino-acid sequence, 416 residues long: Phosphoglycerate kinase (416 aa).

Residues V23, D24, F25, N26, Q38, R39, S62, H63, G65, R66, L121, R122, H169, and R170 each coordinate (2R)-3-phosphoglycerate. Residue G213 participates in ADP binding. G213 provides a ligand contact to CDP. AMP contacts are provided by A214 and K215. A214 is a binding site for ATP. Position 214 (A214) interacts with Mg(2+). A CDP-binding site is contributed by D218. Position 218 (D218) interacts with Mg(2+). K219 serves as a coordination point for AMP. Residue K219 participates in ATP binding. G237 is a binding site for ADP. G237 serves as a coordination point for CDP. AMP is bound by residues G238 and G312. The ATP site is built by G238 and G312. CDP is bound by residues G337, A339, and F342. F342 lines the ADP pocket. AMP is bound at residue E343. ATP contacts are provided by E343, D374, and T375. Residue D374 participates in Mg(2+) binding.

The protein belongs to the phosphoglycerate kinase family. Monomer. Mg(2+) serves as cofactor.

The protein resides in the cytoplasm. The protein localises to the mitochondrion. The enzyme catalyses (2R)-3-phosphoglycerate + ATP = (2R)-3-phospho-glyceroyl phosphate + ADP. It participates in carbohydrate degradation; glycolysis; pyruvate from D-glyceraldehyde 3-phosphate: step 2/5. Functionally, catalyzes one of the two ATP producing reactions in the glycolytic pathway via the reversible conversion of 1,3-diphosphoglycerate to 3-phosphoglycerate. Both L- and D- forms of purine and pyrimidine nucleotides can be used as substrates, but the activity is much lower on pyrimidines. Negatively regulates the biosynthesis of acetyl-CoA from pyruvate in the mitochondrion. The protein is Phosphoglycerate kinase (PGK) of Funneliformis mosseae (Endomycorrhizal fungus).